Here is a 353-residue protein sequence, read N- to C-terminus: O-antigen biosynthesis glycosyltransferase WclY (353 aa).

A helical transmembrane segment spans residues 116–136 (SLIGGLLWCSIWLFFDKLVIL). Residues Asn-190 and Glu-271 each coordinate UDP. The E(x7)E signature appears at 263–271 (EGFGLTVLE).

The protein belongs to the glycosyltransferase group 1 family. Glycosyltransferase 4 subfamily.

It is found in the membrane. Its pathway is bacterial outer membrane biogenesis; LPS O-antigen biosynthesis. Activated by 5mM MnCl(2) and MgCl(2). No significant effect on activity by 5 mM ethylenediaminetetraacetic acid (EDTA), 0.125-0.5% Triton X-100 or dithiothreitol (DTT). Inhibited by 5 mM Zn-acetate. Its function is as follows. Involved in the assembly of the O-repeating unit during O-antigen biosynthesis. Glucosyltransferase accountable for the alpha-D-Glc-1,4-beta-D-Gal linkage within the O-antigen. Transfers alpha-1,4-Glc to the Gal moiety of a specific Gal-beta1-3GalNAc-alpha-OPO3-PO3-phenoxyundecyl (Gal-beta1-3GalNAc-PP-PhU) synthetic natural acceptor substrate analog. Requires both Gal-beta1-3GalNAc-alpha and the diphosphate moiety in the acceptor. Not active with GalNAc-PP-PhU, GlcNAc-PP-PhU, Gal-beta1-3GalNAc-alpha-O-benzyl, D-Rha-alpha1-3GlcNAc-alpha-PP-PhU or D-Man-alpha1-3Man-alpha-5-benzamidopentyl (BAP), nor with glycopeptides TTTVTP (Gal-beta1-3GalNAc-alpha-)TPTG or TT (Gal-beta1-3GalNAc-alpha-)TVTPTPTG as acceptor substrates. Has a broad nucleotide sugar donor substrate specificity with ADP-Glc, TDP-Glc and UDP-Glc as superior donors. Gal, GlcNAc, and GalNAc residues are transferred from UDP-sugars, but with low activity. UDP-Xyl, UDP-GlcA, GDP-Fuc or GDP-K-Rha do not act as donors. The sequence is that of O-antigen biosynthesis glycosyltransferase WclY from Escherichia coli.